A 557-amino-acid chain; its full sequence is uncharacterized protein (557 aa).

Residues Lys-70–Gly-224 form the Helicase ATP-binding domain. Ala-82–Thr-90 contributes to the ATP binding site. Positions Asp-175–His-178 match the DEAH box motif. Residues Gln-363 to Leu-524 form the Helicase C-terminal domain.

This sequence belongs to the SNF2/RAD54 helicase family.

This is an uncharacterized protein from Bacillus subtilis (strain 168).